The primary structure comprises 302 residues: Nucleotide-binding protein Rsph17025_2562 (302 aa).

15–22 (GPSGAGRT) serves as a coordination point for ATP. GTP is bound at residue 62 to 65 (DVRN).

It belongs to the RapZ-like family.

In terms of biological role, displays ATPase and GTPase activities. The protein is Nucleotide-binding protein Rsph17025_2562 of Cereibacter sphaeroides (strain ATCC 17025 / ATH 2.4.3) (Rhodobacter sphaeroides).